The primary structure comprises 267 residues: L-aspartate dehydrogenase 2 (267 aa).

Positions 123 and 189 each coordinate NAD(+). Histidine 219 is an active-site residue.

The protein belongs to the L-aspartate dehydrogenase family.

The catalysed reaction is L-aspartate + NADP(+) + H2O = oxaloacetate + NH4(+) + NADPH + H(+). The enzyme catalyses L-aspartate + NAD(+) + H2O = oxaloacetate + NH4(+) + NADH + H(+). It participates in cofactor biosynthesis; NAD(+) biosynthesis; iminoaspartate from L-aspartate (dehydrogenase route): step 1/1. Its function is as follows. Specifically catalyzes the NAD or NADP-dependent dehydrogenation of L-aspartate to iminoaspartate. The polypeptide is L-aspartate dehydrogenase 2 (Bordetella bronchiseptica (strain ATCC BAA-588 / NCTC 13252 / RB50) (Alcaligenes bronchisepticus)).